Reading from the N-terminus, the 130-residue chain is uncharacterized protein (130 aa).

This is an uncharacterized protein from Bacillus subtilis (strain 168).